The following is a 171-amino-acid chain: Translationally-controlled tumor protein homolog (171 aa).

The region spanning M1–C171 is the TCTP domain.

Belongs to the TCTP family. As to expression, expressed by the venom gland.

The protein localises to the secreted. Functionally, venom protein that causes edema, enhances vascular permeability and is likely related to the inflammatory activity of the venom. This chain is Translationally-controlled tumor protein homolog, found in Micrurus fulvius (Eastern coral snake).